The chain runs to 360 residues: UPF0283 membrane protein Asuc_0957 (360 aa).

Helical transmembrane passes span 74–94, 102–122, and 215–235; these read VIAV…QWLI, WIYF…LSAL, and AVEN…MLFL.

It belongs to the UPF0283 family.

Its subcellular location is the cell inner membrane. This chain is UPF0283 membrane protein Asuc_0957, found in Actinobacillus succinogenes (strain ATCC 55618 / DSM 22257 / CCUG 43843 / 130Z).